The chain runs to 690 residues: Protein SPT2 homolog (690 aa).

The segment at methionine 1–glutamine 579 is important for interaction with DNA. Positions glutamate 40 to alanine 82 form a coiled coil. 2 disordered regions span residues proline 105 to proline 167 and glutamate 186 to isoleucine 619. The span at glutamate 186–lysine 228 shows a compositional bias: basic and acidic residues. Residues serine 229–lysine 243 show a composition bias toward low complexity. Composition is skewed to basic and acidic residues over residues glutamate 244 to alanine 259 and threonine 271 to serine 285. Polar residues predominate over residues histidine 369 to serine 380. Gly residues predominate over residues glycine 383–alanine 396. The segment covering glycine 397–proline 442 has biased composition (low complexity). 3 stretches are compositionally biased toward gly residues: residues glycine 443 to glycine 457, glycine 465 to arginine 477, and leucine 489 to arginine 521. The segment covering valine 545–glycine 565 has biased composition (polar residues). An important for interaction with histones region spans residues glycine 580–arginine 690. The span at aspartate 593–glutamate 617 shows a compositional bias: acidic residues. Positions arginine 650–arginine 690 form a coiled coil.

The protein belongs to the SPT2 family. As to quaternary structure, interacts with POLR1A. Interacts with histones. Interacts with a heterotetrameric complex formed by histone H3 and H4, especially when the histone tetramer is not bound to DNA.

Its subcellular location is the nucleus. The protein localises to the nucleolus. Histone chaperone that stabilizes pre-existing histone tetramers and regulates replication-independent histone exchange on chromatin. Required for normal chromatin refolding in the coding region of transcribed genes, and for the suppression of spurious transcription. Binds DNA and histones and promotes nucleosome assembly (in vitro). Modulates RNA polymerase 1-mediated transcription. Required for optimal growth in the presence of the DNA damaging agents actinomycin D or mitomycin C (in vitro). Facilitates formation of tetrameric histone complexes containing histone H3 and H4. Modulates RNA polymerase 1-mediated transcription. Binds DNA, with a preference for branched DNA species, such as Y-form DNA and Holliday junction DNA. The polypeptide is Protein SPT2 homolog (SPTY2D1) (Gallus gallus (Chicken)).